Here is a 397-residue protein sequence, read N- to C-terminus: 1-deoxy-D-xylulose 5-phosphate reductoisomerase (397 aa).

T12, G13, S14, I15, G38, K39, N40, and N126 together coordinate NADPH. K127 is a 1-deoxy-D-xylulose 5-phosphate binding site. E128 lines the NADPH pocket. D152 is a Mn(2+) binding site. 4 residues coordinate 1-deoxy-D-xylulose 5-phosphate: S153, E154, S188, and H211. E154 contacts Mn(2+). Residue G217 participates in NADPH binding. Residues S224, N229, K230, and E233 each contribute to the 1-deoxy-D-xylulose 5-phosphate site. A Mn(2+)-binding site is contributed by E233.

The protein belongs to the DXR family. Mg(2+) serves as cofactor. Mn(2+) is required as a cofactor.

The enzyme catalyses 2-C-methyl-D-erythritol 4-phosphate + NADP(+) = 1-deoxy-D-xylulose 5-phosphate + NADPH + H(+). It participates in isoprenoid biosynthesis; isopentenyl diphosphate biosynthesis via DXP pathway; isopentenyl diphosphate from 1-deoxy-D-xylulose 5-phosphate: step 1/6. Its function is as follows. Catalyzes the NADPH-dependent rearrangement and reduction of 1-deoxy-D-xylulose-5-phosphate (DXP) to 2-C-methyl-D-erythritol 4-phosphate (MEP). This is 1-deoxy-D-xylulose 5-phosphate reductoisomerase from Haemophilus influenzae (strain PittGG).